The chain runs to 520 residues: GMP synthase [glutamine-hydrolyzing] (520 aa).

The region spanning 9–202 (TVLIVDFGSQ…VHKIAGIKGD (194 aa)) is the Glutamine amidotransferase type-1 domain. The active-site Nucleophile is the C86. Active-site residues include H176 and E178. The GMPS ATP-PPase domain occupies 203–395 (WTMSAYRAKA…LGLPESFIGR (193 aa)). Position 230–236 (230–236 (SGGVDSS)) interacts with ATP.

In terms of assembly, homodimer.

The enzyme catalyses XMP + L-glutamine + ATP + H2O = GMP + L-glutamate + AMP + diphosphate + 2 H(+). It participates in purine metabolism; GMP biosynthesis; GMP from XMP (L-Gln route): step 1/1. Its function is as follows. Catalyzes the synthesis of GMP from XMP. The sequence is that of GMP synthase [glutamine-hydrolyzing] from Sinorhizobium fredii (strain NBRC 101917 / NGR234).